Here is a 554-residue protein sequence, read N- to C-terminus: CTP synthase (554 aa).

The amidoligase domain stretch occupies residues 1–265 (MTPLIFVTGG…DEIVIDQFKL (265 aa)). Ser13 contributes to the CTP binding site. Residue Ser13 participates in UTP binding. ATP contacts are provided by residues 14-19 (SLGKGI) and Asp71. Mg(2+) is bound by residues Asp71 and Glu139. Residues 146 to 148 (DIE), 186 to 191 (KTKPTQ), and Lys222 contribute to the CTP site. UTP-binding positions include 186 to 191 (KTKPTQ) and Lys222. Residues 292-545 (TIAVVGKYVD…VKASRARKAG (254 aa)) enclose the Glutamine amidotransferase type-1 domain. Gly353 is an L-glutamine binding site. Residue Cys380 is the Nucleophile; for glutamine hydrolysis of the active site. L-glutamine contacts are provided by residues 381–384 (YGMQ), Glu404, and Arg471. Catalysis depends on residues His518 and Glu520.

Belongs to the CTP synthase family. As to quaternary structure, homotetramer.

The enzyme catalyses UTP + L-glutamine + ATP + H2O = CTP + L-glutamate + ADP + phosphate + 2 H(+). The catalysed reaction is L-glutamine + H2O = L-glutamate + NH4(+). It carries out the reaction UTP + NH4(+) + ATP = CTP + ADP + phosphate + 2 H(+). Its pathway is pyrimidine metabolism; CTP biosynthesis via de novo pathway; CTP from UDP: step 2/2. Its activity is regulated as follows. Allosterically activated by GTP, when glutamine is the substrate; GTP has no effect on the reaction when ammonia is the substrate. The allosteric effector GTP functions by stabilizing the protein conformation that binds the tetrahedral intermediate(s) formed during glutamine hydrolysis. Inhibited by the product CTP, via allosteric rather than competitive inhibition. Its function is as follows. Catalyzes the ATP-dependent amination of UTP to CTP with either L-glutamine or ammonia as the source of nitrogen. Regulates intracellular CTP levels through interactions with the four ribonucleotide triphosphates. In Xylella fastidiosa (strain M23), this protein is CTP synthase.